The sequence spans 468 residues: MKKLRTRYAPSPTGYLHIGGARTALFNYLLAKHYNGDFIIRIEDTDVKRNIADGEASQIENLKWLNIEANESPLKPNEKYGPYRQSQKLEKYLKIAHELIEKGYAYKAYDNSEELEEQKKHSEKLGVASFRYQRDFLKISEEEKQKRDASGAYSIRVICPKNTTYQWDDLVRGNIAVNSNDIGDWIIIKSDDYPTYNFAVVIDDIDMEISHILRGEEHITNTPKQMMIYDYLNAPKPLFGHLTIITNMEGKKLSKRDLSLKQFIHEYKEEGYNSQAIFNFLTLLGWTDEKARELMDHDEIIKSFLYTRLSKSPSKFDITKMQWFSKQYWKNTPNEELIKILNLNDYDNDWINLFLDLYKENIYSLNQLKNYLKIYKQANLNQEKDLDLNDAEKNVVKSFSSYIDYSNFSVNQIQEAINKTQEKLSIKGKNLFLPIRKATTFQEHGPELAKAIYLFGSEIIEKRMKKWK.

Residues 10–20 carry the 'HIGH' region motif; the sequence is PSPTGYLHIGG. The short motif at 252–256 is the 'KMSKS' region element; the sequence is KLSKR. Position 255 (K255) interacts with ATP.

Belongs to the class-I aminoacyl-tRNA synthetase family. Glutamate--tRNA ligase type 1 subfamily. Monomer.

The protein resides in the cytoplasm. The catalysed reaction is tRNA(Glu) + L-glutamate + ATP = L-glutamyl-tRNA(Glu) + AMP + diphosphate. Its function is as follows. Catalyzes the attachment of glutamate to tRNA(Glu) in a two-step reaction: glutamate is first activated by ATP to form Glu-AMP and then transferred to the acceptor end of tRNA(Glu). In Mycoplasmopsis pulmonis (strain UAB CTIP) (Mycoplasma pulmonis), this protein is Glutamate--tRNA ligase.